A 647-amino-acid chain; its full sequence is Homologous recombination OB-fold protein (647 aa).

Ser-47 is subject to Phosphoserine. Disordered regions lie at residues 284–361, 380–399, and 581–631; these read ARGT…GPQG, SRTP…RRFP, and SFLK…DDLD. Arg-285, Arg-295, Arg-329, and Arg-337 each carry asymmetric dimethylarginine. Over residues 287–308 the composition is skewed to polar residues; that stretch reads TIQSSPQNRFPCQPFQSPSSWL. The span at 319–332 shows a compositional bias: low complexity; that stretch reads TPNSSCSTPSRTSS. Polar residues predominate over residues 380 to 390; the sequence is SRTPQQPTHPS. Over residues 618–631 the composition is skewed to acidic residues; it reads ASPEEELPEADDLD.

As to quaternary structure, interacts with MCM8; this interaction is necessary for MCM8-MCM9 helicase complex recruitment to DNA damage sites. Interacts with RPA1; this interaction associates HROB with the RPA complex.

It localises to the nucleus. The protein resides in the chromosome. Its function is as follows. DNA-binding protein involved in homologous recombination that acts by recruiting the MCM8-MCM9 helicase complex to sites of DNA damage to promote DNA repair synthesis. The sequence is that of Homologous recombination OB-fold protein from Homo sapiens (Human).